The sequence spans 403 residues: Tyrosine--tRNA ligase (403 aa).

Residues 42–51 carry the 'HIGH' region motif; sequence PTAPDLHLGH. The 'KMSKS' region motif lies at 226-230; that stretch reads KMSKS. An ATP-binding site is contributed by K229. Positions 339–400 constitute an S4 RNA-binding domain; the sequence is LRIASLLTAA…GKRNFARVSL (62 aa).

It belongs to the class-I aminoacyl-tRNA synthetase family. TyrS type 2 subfamily. In terms of assembly, homodimer.

Its subcellular location is the cytoplasm. The catalysed reaction is tRNA(Tyr) + L-tyrosine + ATP = L-tyrosyl-tRNA(Tyr) + AMP + diphosphate + H(+). Catalyzes the attachment of tyrosine to tRNA(Tyr) in a two-step reaction: tyrosine is first activated by ATP to form Tyr-AMP and then transferred to the acceptor end of tRNA(Tyr). In Xanthomonas oryzae pv. oryzae (strain MAFF 311018), this protein is Tyrosine--tRNA ligase.